A 94-amino-acid polypeptide reads, in one-letter code: Surfactant-associated protein 3 (94 aa).

Found in lung alveolar cells type I and II, as well as alveolar macrophages (at protein level). Detected also in testis and kidney. Expressed by different tissues of the ocular system like cornea, conjuctiva, lacrimal gland, eyelid and efferent tear ducts (at protein level). From these tissues is secreted into the tear film (at protein level).

Its subcellular location is the cytoplasm. The protein resides in the secreted. In terms of biological role, putative surfactant protein. May be involved in wound healing and in the reduction of the surface tension at the ocular surface. This Homo sapiens (Human) protein is Surfactant-associated protein 3 (SFTA3).